We begin with the raw amino-acid sequence, 444 residues long: Jacalin-related lectin 42 (444 aa).

Ala2 is modified (N-acetylalanine). 3 consecutive Jacalin-type lectin domains span residues 2 to 143, 146 to 289, and 297 to 441; these read ALMV…YYIR, ATKS…YYAP, and TEKL…HVIP.

It belongs to the jacalin lectin family.

This Arabidopsis thaliana (Mouse-ear cress) protein is Jacalin-related lectin 42 (JAL42).